Here is a 315-residue protein sequence, read N- to C-terminus: HPr kinase/phosphorylase (315 aa).

Catalysis depends on residues His-140 and Lys-161. ATP is bound at residue 155–162 (GDSGVGKS). Ser-162 contacts Mg(2+). Asp-179 acts as the Proton acceptor; for phosphorylation activity. Proton donor; for dephosphorylation activity in catalysis. The segment at 203–212 (LEIRGIGIID) is important for the catalytic mechanism of both phosphorylation and dephosphorylation. Glu-204 contributes to the Mg(2+) binding site. The active site involves Arg-245. The segment at 266–271 (PVKTGR) is important for the catalytic mechanism of dephosphorylation.

The protein belongs to the HPrK/P family. As to quaternary structure, homohexamer. The cofactor is Mg(2+).

The catalysed reaction is [HPr protein]-L-serine + ATP = [HPr protein]-O-phospho-L-serine + ADP + H(+). It carries out the reaction [HPr protein]-O-phospho-L-serine + phosphate + H(+) = [HPr protein]-L-serine + diphosphate. Catalyzes the ATP- as well as the pyrophosphate-dependent phosphorylation of a specific serine residue in HPr, a phosphocarrier protein of the phosphoenolpyruvate-dependent sugar phosphotransferase system (PTS). HprK/P also catalyzes the pyrophosphate-producing, inorganic phosphate-dependent dephosphorylation (phosphorolysis) of seryl-phosphorylated HPr (P-Ser-HPr). The two antagonistic activities of HprK/P are regulated by several intracellular metabolites, which change their concentration in response to the absence or presence of rapidly metabolisable carbon sources (glucose, fructose, etc.) in the growth medium. Therefore, by controlling the phosphorylation state of HPr, HPrK/P is a sensor enzyme that plays a major role in the regulation of carbon metabolism and sugar transport: it mediates carbon catabolite repression (CCR), and regulates PTS-catalyzed carbohydrate uptake and inducer exclusion. In Lactiplantibacillus plantarum (strain ATCC BAA-793 / NCIMB 8826 / WCFS1) (Lactobacillus plantarum), this protein is HPr kinase/phosphorylase.